The sequence spans 485 residues: D-alanine--D-alanyl carrier protein ligase (485 aa).

144–145 lines the ATP pocket; it reads TS. Asp189 contributes to the D-alanine binding site. ATP is bound at residue 284–289; that stretch reads NTYGPT. Val293 contributes to the D-alanine binding site. ATP-binding residues include Asp365 and Lys473. Lys473 is a binding site for D-alanine.

Belongs to the ATP-dependent AMP-binding enzyme family. DltA subfamily.

Its subcellular location is the cytoplasm. The catalysed reaction is holo-[D-alanyl-carrier protein] + D-alanine + ATP = D-alanyl-[D-alanyl-carrier protein] + AMP + diphosphate. It participates in cell wall biogenesis; lipoteichoic acid biosynthesis. In terms of biological role, catalyzes the first step in the D-alanylation of lipoteichoic acid (LTA), the activation of D-alanine and its transfer onto the D-alanyl carrier protein (Dcp) DltC. In an ATP-dependent two-step reaction, forms a high energy D-alanyl-AMP intermediate, followed by transfer of the D-alanyl residue as a thiol ester to the phosphopantheinyl prosthetic group of the Dcp. D-alanylation of LTA plays an important role in modulating the properties of the cell wall in Gram-positive bacteria, influencing the net charge of the cell wall. In Staphylococcus epidermidis (strain ATCC 35984 / DSM 28319 / BCRC 17069 / CCUG 31568 / BM 3577 / RP62A), this protein is D-alanine--D-alanyl carrier protein ligase.